We begin with the raw amino-acid sequence, 419 residues long: S-adenosylmethionine synthase (419 aa).

Position 15 (H15) interacts with ATP. A Mg(2+)-binding site is contributed by D17. Residue E43 participates in K(+) binding. L-methionine is bound by residues E56 and Q100. Residues 100-110 form a flexible loop region; sequence QSPDIAQGVDE. ATP-binding positions include 171–173, 248–249, D257, 263–264, A280, and K284; these read DGK, KF, and RK. Residue D257 coordinates L-methionine. L-methionine is bound at residue K288.

This sequence belongs to the AdoMet synthase family. As to quaternary structure, homotetramer; dimer of dimers. It depends on Mg(2+) as a cofactor. K(+) is required as a cofactor.

It is found in the cytoplasm. The enzyme catalyses L-methionine + ATP + H2O = S-adenosyl-L-methionine + phosphate + diphosphate. The protein operates within amino-acid biosynthesis; S-adenosyl-L-methionine biosynthesis; S-adenosyl-L-methionine from L-methionine: step 1/1. Its function is as follows. Catalyzes the formation of S-adenosylmethionine (AdoMet) from methionine and ATP. The overall synthetic reaction is composed of two sequential steps, AdoMet formation and the subsequent tripolyphosphate hydrolysis which occurs prior to release of AdoMet from the enzyme. The protein is S-adenosylmethionine synthase of Synechococcus sp. (strain WH7803).